Reading from the N-terminus, the 158-residue chain is Ecotin (158 aa).

A signal peptide spans 1-21; sequence MRLLPLASVTLLSVLCAQAFA. A disulfide bond links Cys-67 and Cys-104.

Belongs to the protease inhibitor I11 (ecotin) family. As to quaternary structure, homodimer.

It is found in the periplasm. General inhibitor of family S1 serine proteases. This chain is Ecotin, found in Pseudomonas fluorescens (strain ATCC BAA-477 / NRRL B-23932 / Pf-5).